We begin with the raw amino-acid sequence, 48 residues long: uncharacterized protein (48 aa).

The chain crosses the membrane as a helical span at residues 21-43 (SIFVSLGVFAVSVAILKSRLGNF).

Its subcellular location is the membrane. This is an uncharacterized protein from Schizosaccharomyces pombe (strain 972 / ATCC 24843) (Fission yeast).